Here is a 570-residue protein sequence, read N- to C-terminus: MISGILASPGIAFGNVLLLKKEEIVINRQNISTENIKTEINKFFNGRKKSVKQLTEIKIATGEKFGKKKEGIFEGHIMLLEDEELEKEIINLITEKKISAAEATKFIIEGQAKALEKIKDEYLKNRAIDVRDIGSRLLKNILNISIVDLNNIKNQVILISKDLTPSETAQINLKYILGFITDLGGPTSHTSIMARSLEIPAIVGTVNITKKVKNNDFIILDSLNNEIIINPSDQIINEKKQVERKYFFKKENLKKLRNLYATTTDGHNIKIGSNIGNIQDIYSAKKNGAECIGLYRTEFLFMGRNALPTENEQFQAYKEIAESMENKPVIIRTMDIGGDKDLPYMNLPKEENPFLGWRAIRISMDRKEILHAQLRAILRASAFGKIYILFPMIISVEEIRTLKIEVHKLQIQLKKEHLVFDENIKIGIMIETPASAIIADHLIKEVDFFSIGTNDLTQYTLAVDRGNDLISHLYNPISPSVIQLIKQVIDISHLHGKWTGMCGELAGDERVTTLLLGMGLDEFSMSSTSIPKIKEIIRKTSFSKSQELAKKVLKAATTKEILDLLNKFII.

The active-site Tele-phosphohistidine intermediate is the H189. Residues R296 and R332 each contribute to the phosphoenolpyruvate site. Mg(2+)-binding residues include E431 and D455. Residues 454 to 455 (ND) and R465 contribute to the phosphoenolpyruvate site. C502 functions as the Proton donor in the catalytic mechanism.

This sequence belongs to the PEP-utilizing enzyme family. Homodimer. Mg(2+) is required as a cofactor.

The protein resides in the cytoplasm. It catalyses the reaction L-histidyl-[protein] + phosphoenolpyruvate = N(pros)-phospho-L-histidyl-[protein] + pyruvate. Its function is as follows. General (non sugar-specific) component of the phosphoenolpyruvate-dependent sugar phosphotransferase system (sugar PTS). This major carbohydrate active-transport system catalyzes the phosphorylation of incoming sugar substrates concomitantly with their translocation across the cell membrane. Enzyme I transfers the phosphoryl group from phosphoenolpyruvate (PEP) to the phosphoryl carrier protein (HPr). This Buchnera aphidicola subsp. Schizaphis graminum (strain Sg) protein is Phosphoenolpyruvate-protein phosphotransferase (ptsI).